A 132-amino-acid chain; its full sequence is Flagellar assembly factor FliW (132 aa).

Belongs to the FliW family. Interacts with translational regulator CsrA and flagellin(s).

It is found in the cytoplasm. Functionally, acts as an anti-CsrA protein, binds CsrA and prevents it from repressing translation of its target genes, one of which is flagellin. Binds to flagellin and participates in the assembly of the flagellum. In Borreliella afzelii (strain PKo) (Borrelia afzelii), this protein is Flagellar assembly factor FliW.